Here is a 203-residue protein sequence, read N- to C-terminus: ATP-dependent Clp protease proteolytic subunit (203 aa).

Catalysis depends on S98, which acts as the Nucleophile. Residue H123 is part of the active site.

The protein belongs to the peptidase S14 family. Fourteen ClpP subunits assemble into 2 heptameric rings which stack back to back to give a disk-like structure with a central cavity, resembling the structure of eukaryotic proteasomes.

The protein resides in the cytoplasm. The catalysed reaction is Hydrolysis of proteins to small peptides in the presence of ATP and magnesium. alpha-casein is the usual test substrate. In the absence of ATP, only oligopeptides shorter than five residues are hydrolyzed (such as succinyl-Leu-Tyr-|-NHMec, and Leu-Tyr-Leu-|-Tyr-Trp, in which cleavage of the -Tyr-|-Leu- and -Tyr-|-Trp bonds also occurs).. In terms of biological role, cleaves peptides in various proteins in a process that requires ATP hydrolysis. Has a chymotrypsin-like activity. Plays a major role in the degradation of misfolded proteins. This Desulfotalea psychrophila (strain LSv54 / DSM 12343) protein is ATP-dependent Clp protease proteolytic subunit.